Here is a 296-residue protein sequence, read N- to C-terminus: MGALRIDSHQHFWRYRAADYPWIGAGMGVLARDYLPDALHPLMHAQALGASIAVQARAGRDETAFLLELACDEARIAAVVGWEDLRAPQLAERVAEWRGTKLRGFRHQLQDEADVRAFVDDADFARGVAWLQANDYVYDVLVFERQLPDVQAFCARHDAHWLVLDHAGKPALAEFDRDDTALARWRAALRELAALPHVVCKLSGLVTEADWRRGLRASDLRHIEQCLDAALDAFGPQRLMFGSDWPVCLLAASYDEVASLVERWAESRLSAAERSALWGGTAARCYALPEPADARL.

The protein belongs to the metallo-dependent hydrolases superfamily. In terms of assembly, monomer. Does not require a divalent metal for activity. The purified enzyme contains Zn(2+), but the addition of chelators does not diminish the catalytic activity of the enzyme, indicating that it does not require a divalent cation for substrate turnover. serves as cofactor.

It catalyses the reaction L-fucono-1,5-lactone + H2O = L-fuconate + H(+). It carries out the reaction L-fucono-1,4-lactone + H2O = L-fuconate + H(+). The catalysed reaction is D-arabinono-1,4-lactone + H2O = D-arabinonate + H(+). The enzyme catalyses L-xylono-1,4-lactone + H2O = L-xylonate + H(+). It catalyses the reaction L-galactono-1,4-lactone + H2O = L-galactonate + H(+). The protein operates within carbohydrate degradation; L-fucose degradation. In terms of biological role, L-fucono-1,5-lactonase involved in an L-fucose degradation pathway. Catalyzes the hydrolysis of L-fucono-1,5-lactone to L-fuconate. L-fucono-1,5-lactone is the best substrate, but the enzyme can also hydrolyze L-fucono-1,4-lactone, L-galactono-1,4-lactone D-arabinono-1,4-lactone and L-xylono-1,4-lactone. The protein is L-fucono-1,5-lactonase of Burkholderia multivorans (strain ATCC 17616 / 249).